A 1272-amino-acid chain; its full sequence is uncharacterized protein (1272 aa).

This is an uncharacterized protein from Methanocaldococcus jannaschii (strain ATCC 43067 / DSM 2661 / JAL-1 / JCM 10045 / NBRC 100440) (Methanococcus jannaschii).